The chain runs to 334 residues: HTH-type transcriptional regulator RegA (334 aa).

An HTH lacI-type domain is found at 1 to 57 (MAASIKDVAREARVSIATVSRVLNNVDVVNEETKKKVMEAIKKLDYRPNIVARSLKT). The H-T-H motif DNA-binding region spans 5-24 (IKDVAREARVSIATVSRVLN).

Its function is as follows. Involved in the regulation of amylase production. This chain is HTH-type transcriptional regulator RegA (regA), found in Clostridium acetobutylicum (strain ATCC 824 / DSM 792 / JCM 1419 / IAM 19013 / LMG 5710 / NBRC 13948 / NRRL B-527 / VKM B-1787 / 2291 / W).